Reading from the N-terminus, the 170-residue chain is Large ribosomal subunit protein uL18m (170 aa).

This sequence belongs to the universal ribosomal protein uL18 family. Component of the mitochondrial ribosome large subunit (39S) which comprises a 16S rRNA and about 50 distinct proteins.

Its subcellular location is the mitochondrion. The protein is Large ribosomal subunit protein uL18m (mrpl-18) of Caenorhabditis elegans.